An 85-amino-acid chain; its full sequence is Senescence-associated and QQS-related protein (85 aa).

Basic and acidic residues predominate over residues 1-24 (MSFRKVEKKPTEMGRNMTHEKSDS). 2 disordered regions span residues 1–35 (MSFR…PMTV) and 55–85 (SGKA…FPNY). Over residues 58-77 (ARSNYNLTGTAKGTGPINSF) the composition is skewed to polar residues.

Expressed predominantly within leaves and cotyledons vasculatures. Mainly observed in fully expanded leaves, at the base of mature inflorescences, in senescing leaves and cauline leaves, and, to a lower extent, in hypocotyls and rosette leaves prior to flowering.

Plays a role in carbon allocation, including during senescence and stresses, thus impacting starch accumulation. This chain is Senescence-associated and QQS-related protein, found in Arabidopsis thaliana (Mouse-ear cress).